A 92-amino-acid chain; its full sequence is Precursor of elicitor peptide 1 (92 aa).

A propeptide spanning residues 1 to 69 is cleaved from the precursor; the sequence is MEKSDRRSEE…EKEEVVVTSR (69 aa). The interval 35-92 is disordered; that stretch reads HQDSPTTSSPGTSKQPKEEKEDVTMEKEEVVVTSRATKVKAKQRGKEKVSSGRPGQHN. Over residues 37 to 48 the composition is skewed to polar residues; that stretch reads DSPTTSSPGTSK. The segment covering 49 to 64 has biased composition (basic and acidic residues); it reads QPKEEKEDVTMEKEEV.

It belongs to the brassicaceae elicitor peptide family. As to quaternary structure, interacts with its receptor PEPR1.

Its function is as follows. Elicitor of plant defense. Induces the production of plant defensin (PDF1.2) and of H(2)O(2). Promotes resistance to the root fungal pathogen P.irregulare. Triggers the expression of several PROSCOOP genes (e.g. PROSCOOP2, PROSCOOP7, PROSCOOP8, PROSCOOP12 and PROSCOOP13). This Arabidopsis thaliana (Mouse-ear cress) protein is Precursor of elicitor peptide 1.